The primary structure comprises 209 residues: Thymidine kinase (209 aa).

Residues 16 to 23 (GPMFAGKT) and 90 to 93 (DESQ) each bind ATP. Glu91 (proton acceptor) is an active-site residue.

This sequence belongs to the thymidine kinase family. Homotetramer.

It localises to the cytoplasm. The enzyme catalyses thymidine + ATP = dTMP + ADP + H(+). This Aster yellows witches'-broom phytoplasma (strain AYWB) protein is Thymidine kinase.